The following is an 85-amino-acid chain: Sodium channel neurotoxin MeuNaTxalpha-2 (85 aa).

A signal peptide spans 1–19 (MNYLVMISLALLLMTGVES). An LCN-type CS-alpha/beta domain is found at 21-83 (RDAYIANDRN…VPIRIPGECR (63 aa)). Disulfide bonds link cysteine 31/cysteine 82, cysteine 35/cysteine 55, cysteine 41/cysteine 65, and cysteine 45/cysteine 67. Arginine 83 carries the arginine amide modification.

This sequence belongs to the long (4 C-C) scorpion toxin superfamily. Sodium channel inhibitor family. Alpha subfamily. Expressed by the venom gland.

The protein localises to the secreted. Functionally, alpha toxins bind voltage-independently at site-3 of sodium channels (Nav) and inhibit the inactivation of the activated channels, thereby blocking neuronal transmission. This toxin inhibits inactivation of Nav1.4/SCN4A (EC(50)=2.23 uM) and drosophila DmNav1 (EC(50)=220 nM). The toxin (1 uM) does not significantly shift the midpoint of activation at the two channels, but induces a significant depolarizing shift in the V(1/2) of inactivation of the channels. In addition, the toxin accelerates the recovery from fast inactivation in Nav1.4/SCN4A and DmNav1. It also shows antimicrobial activity. This Mesobuthus eupeus (Lesser Asian scorpion) protein is Sodium channel neurotoxin MeuNaTxalpha-2.